The sequence spans 456 residues: Adenylosuccinate lyase (456 aa).

Residues 15–16 (RY), 90–92 (NHD), and 122–123 (TS) each bind N(6)-(1,2-dicarboxyethyl)-AMP. The Proton donor/acceptor role is filled by H171. Q247 serves as a coordination point for N(6)-(1,2-dicarboxyethyl)-AMP. Residue S295 is the Proton donor/acceptor of the active site. Residues S296, 301–303 (KVN), N309, R335, and 340–344 (STVLR) each bind N(6)-(1,2-dicarboxyethyl)-AMP.

This sequence belongs to the lyase 1 family. Adenylosuccinate lyase subfamily. Homotetramer. Residues from neighboring subunits contribute catalytic and substrate-binding residues to each active site.

It catalyses the reaction N(6)-(1,2-dicarboxyethyl)-AMP = fumarate + AMP. The enzyme catalyses (2S)-2-[5-amino-1-(5-phospho-beta-D-ribosyl)imidazole-4-carboxamido]succinate = 5-amino-1-(5-phospho-beta-D-ribosyl)imidazole-4-carboxamide + fumarate. The protein operates within purine metabolism; AMP biosynthesis via de novo pathway; AMP from IMP: step 2/2. Its pathway is purine metabolism; IMP biosynthesis via de novo pathway; 5-amino-1-(5-phospho-D-ribosyl)imidazole-4-carboxamide from 5-amino-1-(5-phospho-D-ribosyl)imidazole-4-carboxylate: step 2/2. Functionally, catalyzes two reactions in de novo purine nucleotide biosynthesis. Catalyzes the breakdown of 5-aminoimidazole- (N-succinylocarboxamide) ribotide (SAICAR or 2-[5-amino-1-(5-phospho-beta-D-ribosyl)imidazole-4-carboxamido]succinate) to 5-aminoimidazole-4-carboxamide ribotide (AICAR or 5-amino-1-(5-phospho-beta-D-ribosyl)imidazole-4-carboxamide) and fumarate, and of adenylosuccinate (ADS or N(6)-(1,2-dicarboxyethyl)-AMP) to adenosine monophosphate (AMP) and fumarate. This Haemophilus influenzae (strain ATCC 51907 / DSM 11121 / KW20 / Rd) protein is Adenylosuccinate lyase (purB).